A 930-amino-acid chain; its full sequence is Wings apart-like protein 1 (930 aa).

A disordered region spans residues 540–566 (FSPTSMSGSQSSVSGNEPTTSKTRVGS). Low complexity predominate over residues 541-553 (SPTSMSGSQSSVS). Residues 554-566 (GNEPTTSKTRVGS) show a composition bias toward polar residues. One can recognise a WAPL domain in the interval 854–909 (KEAEKMIVEAYSALLLAFLSTESRSIRNSIKDYLPKRNLAILVPVLERFVAFHMTL).

Belongs to the WAPL family. As to quaternary structure, interacts with the cohesin complex throughout the cell cycle. As to expression, expressed in roots, leaves, buds and siliques.

It localises to the nucleus. The protein localises to the chromosome. In terms of biological role, regulator of sister chromatid cohesion in meiosis which negatively regulates cohesin association with chromatin, acting as an antagonist of CTF7. Cohesion ensures that chromosome partitioning is accurate in both meiotic and mitotic cells and plays an important role in DNA repair. Essential for the prophase removal of cohesin during meiosis thus determining the timely release of meiotic cohesion. Important for proper spindle attachment and assembly during meiosis. Helps to prevent abnormal centromere association during prophase I in meiocytes. Required for early embryonic patterning. Also involved in chromosome segregation during mitosis. The protein is Wings apart-like protein 1 of Arabidopsis thaliana (Mouse-ear cress).